The following is a 203-amino-acid chain: Putative 3-methyladenine DNA glycosylase (203 aa).

The protein belongs to the DNA glycosylase MPG family.

This is Putative 3-methyladenine DNA glycosylase from Clostridium tetani (strain Massachusetts / E88).